Consider the following 351-residue polypeptide: N-acetyl-gamma-glutamyl-phosphate reductase (351 aa).

The active site involves Cys-154.

Belongs to the NAGSA dehydrogenase family. Type 1 subfamily.

Its subcellular location is the cytoplasm. It catalyses the reaction N-acetyl-L-glutamate 5-semialdehyde + phosphate + NADP(+) = N-acetyl-L-glutamyl 5-phosphate + NADPH + H(+). It functions in the pathway amino-acid biosynthesis; L-arginine biosynthesis; N(2)-acetyl-L-ornithine from L-glutamate: step 3/4. Catalyzes the NADPH-dependent reduction of N-acetyl-5-glutamyl phosphate to yield N-acetyl-L-glutamate 5-semialdehyde. The polypeptide is N-acetyl-gamma-glutamyl-phosphate reductase (Prochlorococcus marinus (strain MIT 9301)).